Reading from the N-terminus, the 329-residue chain is Synaptonemal complex central element protein 1 (329 aa).

Positions M1 to Y29 are disordered. 2 coiled-coil regions span residues R54–L167 and K194–H294. Residues I291–T329 form a disordered region. A compositionally biased stretch (basic and acidic residues) spans V312–T329.

This sequence belongs to the SYCE family. As to quaternary structure, homodimer. Found in a complex with SYCP1 and SYCE2. Interacts with SYCP1, SYCE2 and SYCE3. Interacts with SIX6OS1. Meiotic cells (at protein level). Expressed in the ovary and testis.

The protein localises to the nucleus. It localises to the chromosome. Its function is as follows. Major component of the transverse central element of synaptonemal complexes (SCS), formed between homologous chromosomes during meiotic prophase. Requires SYCP1 in order to be incorporated into the central element. May have a role in the synaptonemal complex assembly, stabilization and recombination. This Mus musculus (Mouse) protein is Synaptonemal complex central element protein 1 (Syce1).